We begin with the raw amino-acid sequence, 119 residues long: Large ribosomal subunit protein uL18 (119 aa).

The protein belongs to the universal ribosomal protein uL18 family. As to quaternary structure, part of the 50S ribosomal subunit; part of the 5S rRNA/L5/L18/L25 subcomplex. Contacts the 5S and 23S rRNAs.

In terms of biological role, this is one of the proteins that bind and probably mediate the attachment of the 5S RNA into the large ribosomal subunit, where it forms part of the central protuberance. The sequence is that of Large ribosomal subunit protein uL18 from Clostridium kluyveri (strain ATCC 8527 / DSM 555 / NBRC 12016 / NCIMB 10680 / K1).